A 498-amino-acid polypeptide reads, in one-letter code: MASQGTKRPYEQMETGGERQNATEIRASVGKMVGGIGRFYIQMCTELKLNDYEGRLIQNSITIEKMVLSAFDERRNKYLEEHPNTGKDPKKTGGPIYRKREGKWIRELILYDKEEIRRIWRQANNGEDATAGLTHLMIWHSNLNDATYQRTRALVRTGMDPRMCSLMQGSTLPRRSGAAGAAVKGIGTMVMELIRMIKRGINDRNFWRGENGRKTRIAYERMCNILKGKFQTAAQRAMMDQVRESRNPGNAEIEDLIFLARSALILRGSVAHKSCLPACVYGLIVASGYDFEREGYSLVGVDPFKLLQNSQIFSLIRPNENPAHKSQLVWMACHSAAFEDLRVSSFIRGTKVIPRGQLSTRGIQIASNENMETIDSNTLELRSRYWAIRTKSGGNTSQQKASAGQISVQPTFSVQRNLPFERTTIMAAFTGNNEGRTSDMRTEIIRMMENAKPDDVSFQGRGVFELSDEKATNPIVPSFDMSKEGSYFFGDNAEEFDN.

The short motif at 1–18 is the Unconventional nuclear localization signal element; the sequence is MASQGTKRPYEQMETGGE. Residues 1 to 22 are disordered; sequence MASQGTKRPYEQMETGGERQNA. The Bipartite nuclear localization signal signature appears at 198–216; sequence KRGINDRNFWRGENGRKTR.

It belongs to the influenza viruses nucleoprotein family. In terms of assembly, homomultimerizes to form the nucleocapsid. May bind host exportin-1/XPO1. Binds to viral genomic RNA. Protein-RNA contacts are mediated by a combination of electrostatic interactions between positively charged residues and the phosphate backbone and planar interactions between aromatic side chains and bases. Post-translationally, late in virus-infected cells, may be cleaved from a 56-kDa protein to a 53-kDa protein by a cellular caspase. This cleavage might be a marker for the onset of apoptosis in infected cells or have a specific function in virus host interaction.

The protein resides in the virion. Its subcellular location is the host nucleus. Functionally, encapsidates the negative strand viral RNA, protecting it from nucleases. The encapsidated genomic RNA is termed the ribonucleoprotein (RNP) and serves as template for transcription and replication. The RNP needs to be localized in the host nucleus to start an infectious cycle, but is too large to diffuse through the nuclear pore complex. NP comprises at least 2 nuclear localization signals that are responsible for the active RNP import into the nucleus through cellular importin alpha/beta pathway. Later in the infection, nclear export of RNPs are mediated through viral proteins NEP interacting with M1 which binds nucleoproteins. It is possible that nucleoprotein binds directly host exportin-1/XPO1 and plays an active role in RNPs nuclear export. M1 interaction with RNP seems to hide nucleoprotein's nuclear localization signals. Soon after a virion infects a new cell, M1 dissociates from the RNP under acidification of the virion driven by M2 protein. Dissociation of M1 from RNP unmasks nucleoprotein's nuclear localization signals, targeting the RNP to the nucleus. The chain is Nucleoprotein from Aves (Horse).